We begin with the raw amino-acid sequence, 327 residues long: Sugar transporter ERD6-like 9 (327 aa).

A run of 8 helical transmembrane segments spans residues 26 to 46, 68 to 88, 102 to 122, 125 to 145, 152 to 172, 180 to 200, 260 to 280, and 295 to 315; these read FLVFTTFIIVSASFSFGVALG, VFGSLLTFGGMIGALFSATIA, VFCISGWLAIALAKNIIWLDL, FFVGIGVGLLSYVVPVYIAEI, GTFTFSNQLLQNCGVATAYYL, IIALIGILPCLIQLVGLFFVP, LTIGIGLMLLQQLSGSAGLGY, and IGMTVLSIVVVPKAILGLILV.

This sequence belongs to the major facilitator superfamily. Sugar transporter (TC 2.A.1.1) family.

The protein localises to the membrane. Sugar transporter. This Arabidopsis thaliana (Mouse-ear cress) protein is Sugar transporter ERD6-like 9.